We begin with the raw amino-acid sequence, 488 residues long: E3 ubiquitin-protein ligase TRIM34 (488 aa).

An RING-type zinc finger spans residues 15–60 (CPICLELLTEPLSLDCGHSLCRACITVSNKEAVTSMGGKSSCPVCG). A B box-type zinc finger spans residues 92–134 (KKRDLCDHHGEKLLLFCKEDRKVICWLCERSQEHRGHHTVLTE). Zn(2+) contacts are provided by Cys-97, His-100, Cys-119, and His-125. Residues 131-239 (VLTEEVFKEC…VRELISDVEC (109 aa)) are a coiled coil. The region spanning 283-488 (LSRMLQMFRE…APMTLCPPSS (206 aa)) is the B30.2/SPRY domain.

This sequence belongs to the TRIM/RBCC family. As to quaternary structure, homotrimer. Interacts (via B-box and SPRY domain) with TRIM5. (Microbial infection) Interacts (via the B30.2/SPRY domain) with HIV-1 capsid complexes. In terms of tissue distribution, is the most abundant form. It is highly expressed in the placenta, spleen, colon and peripheral blood leukocytes.

The protein localises to the cytoplasm. Its subcellular location is the mitochondrion. It catalyses the reaction S-ubiquitinyl-[E2 ubiquitin-conjugating enzyme]-L-cysteine + [acceptor protein]-L-lysine = [E2 ubiquitin-conjugating enzyme]-L-cysteine + N(6)-ubiquitinyl-[acceptor protein]-L-lysine.. It participates in protein modification; protein ubiquitination. Functionally, functions as antiviral protein and contributes to the defense against retroviral infections. Acts as a capsid-specific restriction factor with the help of TRIM5 and prevents infection from non-host-adapted retroviruses. During influenza A virus infection, promotes programmed cell death by targeting ZBP1 for 'Lys-63'-linked polyubiquitination. In turn, promotes ZBP1 recruitment of RIPK3 to mediate virus-induced programmed necrosis. Negatively regulates the function of mitochondria by enhancing mitochondrial depolarization leading to cytochrome c release and mitochondria-dependent apoptosis. Also promotes the formation of multinucleated giant cells by means of cell fusion and phagocytosis in epithelial cells. In Homo sapiens (Human), this protein is E3 ubiquitin-protein ligase TRIM34 (TRIM34).